The sequence spans 285 residues: MTQNHDPYSDAQALVGLTLGKATDYQAEYDASLLQGVPRSLNRNAIALTGTLPFHGADIWTGYELSWLNAKGKPMVAIAEFHLSYESLNLIESKSFKLYLNSFNQTKFDSIDSLQKTLVADLSQCAQGDISVKIIEPKSFGIQRIIELPGTCIDDLDIEVSDYSFNPDYLENSTDDKQTVAETLNSNLLKSNCLITSQPDWGSVMIRYQGPKIDREKLLRYLISFRQHNEFHEQCVERIFVDLKRFCHCTKLTVYARYTRRGGLDINPYRSDFEQPGESHRLARQ.

91–93 (IES) contacts substrate. 93–94 (SK) is an NADPH binding site. Cys-193 serves as the catalytic Thioimide intermediate. Asp-200 serves as the catalytic Proton donor. Residue 232-233 (HE) coordinates substrate. 261 to 262 (RG) serves as a coordination point for NADPH.

Belongs to the GTP cyclohydrolase I family. QueF type 2 subfamily. As to quaternary structure, homodimer.

Its subcellular location is the cytoplasm. It carries out the reaction 7-aminomethyl-7-carbaguanine + 2 NADP(+) = 7-cyano-7-deazaguanine + 2 NADPH + 3 H(+). Its pathway is tRNA modification; tRNA-queuosine biosynthesis. Its function is as follows. Catalyzes the NADPH-dependent reduction of 7-cyano-7-deazaguanine (preQ0) to 7-aminomethyl-7-deazaguanine (preQ1). The chain is NADPH-dependent 7-cyano-7-deazaguanine reductase from Shewanella baltica (strain OS223).